Reading from the N-terminus, the 365-residue chain is Mitogen-activated protein kinase HOG1 (365 aa).

The region spanning 20-306 is the Protein kinase domain; that stretch reads YSDLQPVGMG…ATNALAHEYL (287 aa). Residues 26–34 and Lys-49 each bind ATP; that span reads VGMGAFGLV. Asp-148 serves as the catalytic Proton acceptor. A TXY motif is present at residues 178–180; it reads TGY.

This sequence belongs to the protein kinase superfamily. Ser/Thr protein kinase family. MAP kinase subfamily. HOG1 sub-subfamily. It depends on Mg(2+) as a cofactor.

The protein localises to the cytoplasm. Its subcellular location is the nucleus. The enzyme catalyses L-seryl-[protein] + ATP = O-phospho-L-seryl-[protein] + ADP + H(+). It carries out the reaction L-threonyl-[protein] + ATP = O-phospho-L-threonyl-[protein] + ADP + H(+). Functionally, proline-directed serine/threonine-protein kinase involved in a signal transduction pathway that is activated by changes in the osmolarity of the extracellular environment. Controls osmotic regulation of transcription of target genes. Involved in environmental stress response, hyphal growth, conidiation and possibly secondary metabolism such as ustiloxin biosynthesis or the biosynthesis of other phytotoxic compounds that are inhibitory to rice shoot growth during seed germination. Plays a key role in responses to cell wall and membrane stresses but not oxidative stress. The sequence is that of Mitogen-activated protein kinase HOG1 from Ustilaginoidea virens (Rice false smut fungus).